An 81-amino-acid polypeptide reads, in one-letter code: Neurotoxin LmNaTx11.1 (81 aa).

A signal peptide spans 1 to 18; the sequence is MKIVIIFFIAMMAVGVYS. The LCN-type CS-alpha/beta domain maps to 19 to 80; sequence KDGYLVKKNG…PTYPSSKTCS (62 aa). Intrachain disulfides connect Cys29–Cys79, Cys33–Cys56, Cys42–Cys61, and Cys46–Cys63.

It belongs to the long (4 C-C) scorpion toxin superfamily. Sodium channel inhibitor family. Beta subfamily. In terms of tissue distribution, expressed by the venom gland.

The protein resides in the secreted. Binds voltage-independently at site-4 of sodium channels (Nav) and shift the voltage of activation toward more negative potentials thereby affecting sodium channel activation and promoting spontaneous and repetitive firing. This chain is Neurotoxin LmNaTx11.1, found in Lychas mucronatus (Chinese swimming scorpion).